The chain runs to 463 residues: Chaperone SurA (463 aa).

The N-terminal stretch at 1-25 is a signal peptide; that stretch reads MTKPFSVVLASLLAITSTVSPLASA. PpiC domains follow at residues 174 to 276 and 289 to 388; these read GSQY…KLVE and VTEY…QRVG. 2 disordered regions span residues 328-348 and 432-463; these read QATA…GDLG and RTGD…KPTR. The segment covering 440 to 452 has biased composition (low complexity); sequence NATAAPAKSADPA. The span at 453–463 shows a compositional bias: pro residues; the sequence is APSPPPAKPTR.

The protein resides in the periplasm. It catalyses the reaction [protein]-peptidylproline (omega=180) = [protein]-peptidylproline (omega=0). Its function is as follows. Chaperone involved in the correct folding and assembly of outer membrane proteins. Recognizes specific patterns of aromatic residues and the orientation of their side chains, which are found more frequently in integral outer membrane proteins. May act in both early periplasmic and late outer membrane-associated steps of protein maturation. The polypeptide is Chaperone SurA (Xanthomonas euvesicatoria pv. vesicatoria (strain 85-10) (Xanthomonas campestris pv. vesicatoria)).